Here is a 360-residue protein sequence, read N- to C-terminus: 3-dehydroquinate synthase (360 aa).

Residues 71–76, 105–109, 129–130, lysine 142, lysine 151, and 169–172 each bind NAD(+); these read DGEQYK, GVIGD, TT, and CLDT. Zn(2+) contacts are provided by glutamate 184, histidine 247, and histidine 264.

This sequence belongs to the sugar phosphate cyclases superfamily. Dehydroquinate synthase family. The cofactor is Co(2+). Zn(2+) is required as a cofactor. It depends on NAD(+) as a cofactor.

It is found in the cytoplasm. The enzyme catalyses 7-phospho-2-dehydro-3-deoxy-D-arabino-heptonate = 3-dehydroquinate + phosphate. It functions in the pathway metabolic intermediate biosynthesis; chorismate biosynthesis; chorismate from D-erythrose 4-phosphate and phosphoenolpyruvate: step 2/7. Its function is as follows. Catalyzes the conversion of 3-deoxy-D-arabino-heptulosonate 7-phosphate (DAHP) to dehydroquinate (DHQ). The protein is 3-dehydroquinate synthase of Erwinia tasmaniensis (strain DSM 17950 / CFBP 7177 / CIP 109463 / NCPPB 4357 / Et1/99).